The chain runs to 548 residues: Sesquiterpene synthase TPS1 (548 aa).

5 residues coordinate (2E,6E)-farnesyl diphosphate: arginine 264, aspartate 301, aspartate 305, arginine 442, and aspartate 445. 2 residues coordinate Mg(2+): aspartate 301 and aspartate 305. The DDXXD motif motif lies at 301–305 (DDTYD). Residues aspartate 445 and glutamate 453 each coordinate Mg(2+).

Belongs to the terpene synthase family. Tpsa subfamily. Monomer. It depends on Mg(2+) as a cofactor. In terms of tissue distribution, expressed in leaves and stems.

It localises to the cytoplasm. It carries out the reaction (2E,6E)-farnesyl diphosphate = germacrene D + diphosphate. The catalysed reaction is (2E,6E)-farnesyl diphosphate = (-)-(E)-beta-caryophyllene + diphosphate. The enzyme catalyses (2E,6E)-farnesyl diphosphate = beta-copaene + diphosphate. The protein operates within secondary metabolite biosynthesis; terpenoid biosynthesis. Its function is as follows. Sesquiterpene synthase involved in the biosynthesis of volatile compounds. Mediates the conversion of (2E,6E)-farnesyl diphosphate (FPP) into germacrene D, (-)-(E)-beta-caryophyllene and beta-copaene. The chain is Sesquiterpene synthase TPS1 from Xanthium strumarium (Rough cocklebur).